A 357-amino-acid polypeptide reads, in one-letter code: S-adenosylmethionine:tRNA ribosyltransferase-isomerase (357 aa).

This sequence belongs to the QueA family. Monomer.

It localises to the cytoplasm. It carries out the reaction 7-aminomethyl-7-carbaguanosine(34) in tRNA + S-adenosyl-L-methionine = epoxyqueuosine(34) in tRNA + adenine + L-methionine + 2 H(+). It functions in the pathway tRNA modification; tRNA-queuosine biosynthesis. Transfers and isomerizes the ribose moiety from AdoMet to the 7-aminomethyl group of 7-deazaguanine (preQ1-tRNA) to give epoxyqueuosine (oQ-tRNA). In Proteus mirabilis (strain HI4320), this protein is S-adenosylmethionine:tRNA ribosyltransferase-isomerase.